Reading from the N-terminus, the 544-residue chain is Esterase P (544 aa).

A signal peptide spans 1–19 (MSIFKRLLCLTLLWIAALE). The N-linked (GlcNAc...) asparagine glycan is linked to asparagine 75. The cysteines at positions 83 and 102 are disulfide-linked. The N-linked (GlcNAc...) asparagine glycan is linked to asparagine 114. The Acyl-ester intermediate role is filled by serine 206. The cysteines at positions 258 and 270 are disulfide-linked. Asparagine 262 and asparagine 456 each carry an N-linked (GlcNAc...) asparagine glycan. Histidine 466 (charge relay system) is an active-site residue. Cysteine 514 and cysteine 535 are joined by a disulfide.

The protein belongs to the type-B carboxylesterase/lipase family. As to quaternary structure, monomer.

The protein localises to the secreted. It catalyses the reaction a carboxylic ester + H2O = an alcohol + a carboxylate + H(+). The sequence is that of Esterase P (Est-P) from Drosophila melanogaster (Fruit fly).